We begin with the raw amino-acid sequence, 495 residues long: Putative FAD-containing monooxygenase MymA (495 aa).

FAD contacts are provided by residues S15, E36, W45, 56–57, and V104; that span reads DS.

It belongs to the FAD-binding monooxygenase family. FAD is required as a cofactor.

In terms of biological role, required for maintaining the appropriate mycolic acid composition and permeability of the envelope on its exposure to acidic pH. The chain is Putative FAD-containing monooxygenase MymA (mymA) from Mycobacterium tuberculosis (strain CDC 1551 / Oshkosh).